Consider the following 180-residue polypeptide: uncharacterized protein (180 aa).

This is an uncharacterized protein from Aquifex aeolicus (strain VF5).